Consider the following 569-residue polypeptide: Methionine--tRNA ligase (569 aa).

The 'HIGH' region signature appears at 11 to 21 (PYINGIKHLGN). 4 residues coordinate Zn(2+): Cys-143, Cys-146, Cys-156, and Cys-159. The short motif at 342-346 (KFSTS) is the 'KMSKS' region element. Thr-345 is a binding site for ATP.

This sequence belongs to the class-I aminoacyl-tRNA synthetase family. MetG type 1 subfamily. In terms of assembly, monomer. It depends on Zn(2+) as a cofactor.

It is found in the cytoplasm. It carries out the reaction tRNA(Met) + L-methionine + ATP = L-methionyl-tRNA(Met) + AMP + diphosphate. Its function is as follows. Is required not only for elongation of protein synthesis but also for the initiation of all mRNA translation through initiator tRNA(fMet) aminoacylation. The protein is Methionine--tRNA ligase of Caulobacter vibrioides (strain ATCC 19089 / CIP 103742 / CB 15) (Caulobacter crescentus).